Reading from the N-terminus, the 487-residue chain is Glycogen synthase 2 (487 aa).

An ADP-alpha-D-glucose-binding site is contributed by Lys12.

This sequence belongs to the glycosyltransferase 1 family. Bacterial/plant glycogen synthase subfamily.

The enzyme catalyses [(1-&gt;4)-alpha-D-glucosyl](n) + ADP-alpha-D-glucose = [(1-&gt;4)-alpha-D-glucosyl](n+1) + ADP + H(+). Its pathway is glycan biosynthesis; glycogen biosynthesis. In terms of biological role, synthesizes alpha-1,4-glucan chains using ADP-glucose. This chain is Glycogen synthase 2, found in Methylococcus capsulatus (strain ATCC 33009 / NCIMB 11132 / Bath).